The sequence spans 284 residues: Avenin-like b10 (284 aa).

The first 18 residues, methionine 1 to alanine 18, serve as a signal peptide directing secretion.

Belongs to the prolamin family. Contains disulfide bonds.

Functionally, seed storage protein. Might be integrated via inter-chain disulfide bonds within the glutenin polymer. The chain is Avenin-like b10 from Triticum aestivum (Wheat).